The primary structure comprises 646 residues: Tyrosine-protein kinase MasK (646 aa).

Topologically, residues 1–415 are periplasmic; the sequence is MSPPQTTLPV…PTAGGRRWRT (415 aa). Residues 25-300 enclose the Protein kinase domain; that stretch reads YVLVRKLAEG…AFADALETFL (276 aa). Residues 31-39 and Lys57 contribute to the ATP site; that span reads LAEGGMAEI. Asp163 acts as the Proton acceptor in catalysis. The interval 373-410 is disordered; sequence TSAQRPGMSMRPSSPGVPAHGAASRGSTSPESAPTAGG. The helical transmembrane segment at 416-433 threads the bilayer; the sequence is LAVGLAGGLMLAAAGIVG. The Cytoplasmic segment spans residues 434–646; sequence YRQWMTTPAS…VMPFSWRVTQ (213 aa). Residues 521–547 are disordered; sequence AGAASDVEAEADEEGADAAPVRSKKAS. The span at 527 to 536 shows a compositional bias: acidic residues; the sequence is VEAEADEEGA.

Belongs to the protein kinase superfamily. Tyr protein kinase family. As to quaternary structure, interacts with MglA. In terms of processing, autophosphorylated.

It is found in the cell inner membrane. The enzyme catalyses L-tyrosyl-[protein] + ATP = O-phospho-L-tyrosyl-[protein] + ADP + H(+). Functionally, essential for growth. Interacts with MglA to control social gliding motility. The chain is Tyrosine-protein kinase MasK (masK) from Myxococcus xanthus (strain DK1622).